Here is a 356-residue protein sequence, read N- to C-terminus: Dual-specificity RNA methyltransferase RlmN (356 aa).

Residue Glu95 is the Proton acceptor of the active site. The 232-residue stretch at 101 to 332 folds into the Radical SAM core domain; it reads EDERGTLCIS…VTVIRDRRGE (232 aa). A disulfide bond links Cys108 and Cys338. 3 residues coordinate [4Fe-4S] cluster: Cys115, Cys119, and Cys122. Residues 165-166, Ser197, 219-221, and Asn295 each bind S-adenosyl-L-methionine; these read GE and SLH. The active-site S-methylcysteine intermediate is the Cys338.

Belongs to the radical SAM superfamily. RlmN family. [4Fe-4S] cluster is required as a cofactor.

The protein resides in the cytoplasm. It catalyses the reaction adenosine(2503) in 23S rRNA + 2 reduced [2Fe-2S]-[ferredoxin] + 2 S-adenosyl-L-methionine = 2-methyladenosine(2503) in 23S rRNA + 5'-deoxyadenosine + L-methionine + 2 oxidized [2Fe-2S]-[ferredoxin] + S-adenosyl-L-homocysteine. It carries out the reaction adenosine(37) in tRNA + 2 reduced [2Fe-2S]-[ferredoxin] + 2 S-adenosyl-L-methionine = 2-methyladenosine(37) in tRNA + 5'-deoxyadenosine + L-methionine + 2 oxidized [2Fe-2S]-[ferredoxin] + S-adenosyl-L-homocysteine. In terms of biological role, specifically methylates position 2 of adenine 2503 in 23S rRNA and position 2 of adenine 37 in tRNAs. m2A2503 modification seems to play a crucial role in the proofreading step occurring at the peptidyl transferase center and thus would serve to optimize ribosomal fidelity. The sequence is that of Dual-specificity RNA methyltransferase RlmN from Magnetococcus marinus (strain ATCC BAA-1437 / JCM 17883 / MC-1).